Reading from the N-terminus, the 439-residue chain is Ribosomal protein uS12 methylthiotransferase RimO (439 aa).

The region spanning 4–114 is the MTTase N-terminal domain; that stretch reads PKVGFVSLGC…VVRAVHGVAP (111 aa). Residues Cys13, Cys49, Cys78, Cys147, Cys151, and Cys154 each coordinate [4Fe-4S] cluster. Residues 133-370 form the Radical SAM core domain; it reads LTPRHYAYLK…MEHQQAISTA (238 aa). The TRAM domain maps to 373–439; the sequence is STRVGREIDV…EYDLWGERIA (67 aa).

Belongs to the methylthiotransferase family. RimO subfamily. [4Fe-4S] cluster is required as a cofactor.

The protein localises to the cytoplasm. It catalyses the reaction L-aspartate(89)-[ribosomal protein uS12]-hydrogen + (sulfur carrier)-SH + AH2 + 2 S-adenosyl-L-methionine = 3-methylsulfanyl-L-aspartate(89)-[ribosomal protein uS12]-hydrogen + (sulfur carrier)-H + 5'-deoxyadenosine + L-methionine + A + S-adenosyl-L-homocysteine + 2 H(+). Functionally, catalyzes the methylthiolation of an aspartic acid residue of ribosomal protein uS12. The chain is Ribosomal protein uS12 methylthiotransferase RimO from Bordetella parapertussis (strain 12822 / ATCC BAA-587 / NCTC 13253).